The primary structure comprises 936 residues: Pre-rRNA-processing protein FHL1 (936 aa).

Disordered stretches follow at residues 1 to 90 and 139 to 169; these read MDGE…NGNL and DHSR…QDNT. The span at 9-29 shows a compositional bias: polar residues; that stretch reads ESSNHVGTSSPTTETQFTIDS. At Ser-44 the chain carries Phosphoserine. Over residues 139–150 the composition is skewed to basic and acidic residues; sequence DHSREVSSKEDI. The residue at position 228 (Ser-228) is a Phosphoserine. Phosphothreonine occurs at positions 230 and 247. Positions 243–257 are enriched in polar residues; it reads PPQNTVTENNSTDAE. A disordered region spans residues 243 to 270; sequence PPQNTVTENNSTDAETTQRKLSEPIDAS. A Phosphoserine modification is found at Ser-264. Residues 300–357 enclose the FHA domain; that stretch reads AIIGRRSENDFSHKVDVNLGPSKSISRRHAQIFYNFGTGRFELSIIGKNGAFVDDIFV. Residues 384-395 are compositionally biased toward basic and acidic residues; it reads EQERNDDSKSPE. The interval 384 to 442 is disordered; sequence EQERNDDSKSPENADIAESEINTRNLKKNEPKSKKKITTGAKPKKAQTKPAVKKEKKPP. Residues 416-430 show a composition bias toward basic residues; the sequence is SKKKITTGAKPKKAQ. The segment at residues 460–552 is a DNA-binding region (fork-head); the sequence is TKPTVSYSAM…ERQKKKQSEI (93 aa). Positions 718 to 936 are disordered; it reads AKAQHSKPIR…EVNVSLEEKL (219 aa). Composition is skewed to polar residues over residues 742–753 and 765–777; these read SQLSASASSHPN and DPSS…QPRQ. Composition is skewed to low complexity over residues 779 to 795 and 815 to 853; these read ARAT…AAAS and ESGT…TSSE. The segment covering 854 to 863 has biased composition (acidic residues); the sequence is SESESDSGSE. The span at 864–911 shows a compositional bias: basic and acidic residues; that stretch reads VDEKNNKNEKIDSESIKNNESKDDIPSKDENSSNDNREISKTDEEGHD.

It is found in the nucleus. Its function is as follows. Acts as a transcriptional regulator that recruits coactivator IFH1 to the promoters of ribosomal protein genes. Recruited to ribosomal gene promoters by RAP1. This Saccharomyces cerevisiae (strain ATCC 204508 / S288c) (Baker's yeast) protein is Pre-rRNA-processing protein FHL1 (FHL1).